The following is a 148-amino-acid chain: Flavodoxin (148 aa).

The Flavodoxin-like domain maps to 4 to 145; that stretch reads VLIVYGSTTG…DVSAWAGRVV (142 aa).

Belongs to the flavodoxin family. It depends on FMN as a cofactor.

Its function is as follows. Low-potential electron donor to a number of redox enzymes. This is Flavodoxin from Nitratidesulfovibrio vulgaris (strain DSM 19637 / Miyazaki F) (Desulfovibrio vulgaris).